Consider the following 818-residue polypeptide: Probable helicase MAGATAMA 3 (818 aa).

The region spanning 259 to 559 (NKSQKEAIDV…KMLKTQYRMH (301 aa)) is the UvrD-like helicase ATP-binding domain. 280 to 287 (GPPGTGKT) contributes to the ATP binding site. 2 stretches are compositionally biased toward acidic residues: residues 781-790 (PDAPLYEDES) and 798-818 (GDDD…AGED). Residues 781-818 (PDAPLYEDESLPVAPYGGDDDFGDGDADQDDVAMAGED) are disordered.

The protein belongs to the helicase family. In terms of tissue distribution, expressed in flowers, siliques, leaves, roots and shoot apex.

It is found in the nucleus. Probable helicase that may regulate RNA molecules involved in nucleolar organization and pollen tube guidance. This is Probable helicase MAGATAMA 3 (MAA3) from Arabidopsis thaliana (Mouse-ear cress).